The primary structure comprises 498 residues: Isoflavone 2'-hydroxylase (498 aa).

The helical transmembrane segment at 3-23 threads the bilayer; it reads ILSYLCYSLFYLSIFFIIRLL. Cys436 lines the heme pocket.

This sequence belongs to the cytochrome P450 family. Heme serves as cofactor. In terms of tissue distribution, expressed constitutively in roots, but present at very low levels in uninfected stems and leaves.

The protein localises to the endoplasmic reticulum membrane. It carries out the reaction formononetin + reduced [NADPH--hemoprotein reductase] + O2 = 2'-hydroxyformononetin + oxidized [NADPH--hemoprotein reductase] + H2O + H(+). Its function is as follows. Involved in the biosynthesis of the pterocarpin phytoalexins. Acts on isoflavones with a 4'-methoxy group on the B-ring, such as formononetin and biochanin A, and on pseudobaptigenin. Has a low activity with daidzein and genistein and no activity with the 7-O-methylated isoflavonoids isoformononetin and prunetin. In Medicago truncatula (Barrel medic), this protein is Isoflavone 2'-hydroxylase.